We begin with the raw amino-acid sequence, 301 residues long: Ornithine carbamoyltransferase (301 aa).

Carbamoyl phosphate-binding positions include R107 and 134–137 (HPLQ). Residues N165, D220, and 224 to 225 (SM) contribute to the L-ornithine site. Residues 260-261 (CL) and R288 contribute to the carbamoyl phosphate site.

This sequence belongs to the aspartate/ornithine carbamoyltransferase superfamily. OTCase family. In terms of assembly, homotrimer.

The protein localises to the cytoplasm. It carries out the reaction carbamoyl phosphate + L-ornithine = L-citrulline + phosphate + H(+). Its pathway is amino-acid biosynthesis; L-arginine biosynthesis; L-arginine from L-ornithine and carbamoyl phosphate: step 1/3. With respect to regulation, inhibited by delta-N-phosphonoacetyl-L-ornithine. Its function is as follows. Reversibly catalyzes the transfer of the carbamoyl group from carbamoyl phosphate (CP) to the N(epsilon) atom of ornithine (ORN) to produce L-citrulline, which is a substrate for argininosuccinate synthetase, the enzyme involved in the final step in arginine biosynthesis. The protein is Ornithine carbamoyltransferase of Thermus thermophilus (strain ATCC BAA-163 / DSM 7039 / HB27).